A 145-amino-acid polypeptide reads, in one-letter code: D-aminoacyl-tRNA deacylase (145 aa).

The Gly-cisPro motif, important for rejection of L-amino acids signature appears at 137 to 138 (GP).

The protein belongs to the DTD family. Homodimer.

The protein localises to the cytoplasm. The enzyme catalyses glycyl-tRNA(Ala) + H2O = tRNA(Ala) + glycine + H(+). The catalysed reaction is a D-aminoacyl-tRNA + H2O = a tRNA + a D-alpha-amino acid + H(+). An aminoacyl-tRNA editing enzyme that deacylates mischarged D-aminoacyl-tRNAs. Also deacylates mischarged glycyl-tRNA(Ala), protecting cells against glycine mischarging by AlaRS. Acts via tRNA-based rather than protein-based catalysis; rejects L-amino acids rather than detecting D-amino acids in the active site. By recycling D-aminoacyl-tRNA to D-amino acids and free tRNA molecules, this enzyme counteracts the toxicity associated with the formation of D-aminoacyl-tRNA entities in vivo and helps enforce protein L-homochirality. This Francisella tularensis subsp. holarctica (strain FTNF002-00 / FTA) protein is D-aminoacyl-tRNA deacylase.